Consider the following 335-residue polypeptide: NADH-quinone oxidoreductase subunit H (335 aa).

8 helical membrane-spanning segments follow: residues 11-31 (VIIS…AGAL), 81-101 (VIFT…FAVI), 114-134 (IGLL…LFAG), 154-174 (VSYE…VGSF), 187-207 (LWFI…GVAV), 238-258 (FFVG…TLFF), 270-290 (QLAF…FILL), and 309-329 (FCLP…LLNT).

It belongs to the complex I subunit 1 family. As to quaternary structure, NDH-1 is composed of 13 different subunits. Subunits NuoA, H, J, K, L, M, N constitute the membrane sector of the complex.

The protein localises to the cell inner membrane. It catalyses the reaction a quinone + NADH + 5 H(+)(in) = a quinol + NAD(+) + 4 H(+)(out). Its function is as follows. NDH-1 shuttles electrons from NADH, via FMN and iron-sulfur (Fe-S) centers, to quinones in the respiratory chain. The immediate electron acceptor for the enzyme in this species is believed to be ubiquinone. Couples the redox reaction to proton translocation (for every two electrons transferred, four hydrogen ions are translocated across the cytoplasmic membrane), and thus conserves the redox energy in a proton gradient. This subunit may bind ubiquinone. The polypeptide is NADH-quinone oxidoreductase subunit H (Pseudomonas fluorescens (strain SBW25)).